The primary structure comprises 483 residues: Aspartyl/glutamyl-tRNA(Asn/Gln) amidotransferase subunit B (483 aa).

The protein belongs to the GatB/GatE family. GatB subfamily. As to quaternary structure, heterotrimer of A, B and C subunits.

It carries out the reaction L-glutamyl-tRNA(Gln) + L-glutamine + ATP + H2O = L-glutaminyl-tRNA(Gln) + L-glutamate + ADP + phosphate + H(+). It catalyses the reaction L-aspartyl-tRNA(Asn) + L-glutamine + ATP + H2O = L-asparaginyl-tRNA(Asn) + L-glutamate + ADP + phosphate + 2 H(+). Allows the formation of correctly charged Asn-tRNA(Asn) or Gln-tRNA(Gln) through the transamidation of misacylated Asp-tRNA(Asn) or Glu-tRNA(Gln) in organisms which lack either or both of asparaginyl-tRNA or glutaminyl-tRNA synthetases. The reaction takes place in the presence of glutamine and ATP through an activated phospho-Asp-tRNA(Asn) or phospho-Glu-tRNA(Gln). The sequence is that of Aspartyl/glutamyl-tRNA(Asn/Gln) amidotransferase subunit B from Rickettsia canadensis (strain McKiel).